Reading from the N-terminus, the 356-residue chain is S-adenosylmethionine:tRNA ribosyltransferase-isomerase (356 aa).

It belongs to the QueA family. Monomer.

The protein localises to the cytoplasm. It catalyses the reaction 7-aminomethyl-7-carbaguanosine(34) in tRNA + S-adenosyl-L-methionine = epoxyqueuosine(34) in tRNA + adenine + L-methionine + 2 H(+). The protein operates within tRNA modification; tRNA-queuosine biosynthesis. Functionally, transfers and isomerizes the ribose moiety from AdoMet to the 7-aminomethyl group of 7-deazaguanine (preQ1-tRNA) to give epoxyqueuosine (oQ-tRNA). The sequence is that of S-adenosylmethionine:tRNA ribosyltransferase-isomerase from Ralstonia nicotianae (strain ATCC BAA-1114 / GMI1000) (Ralstonia solanacearum).